A 186-amino-acid chain; its full sequence is Putative 5'(3')-deoxyribonucleotidase (186 aa).

Catalysis depends on D6, which acts as the Nucleophile. Positions 6, 8, and 137 each coordinate Mg(2+). D8 acts as the Proton donor in catalysis.

It belongs to the 5'(3')-deoxyribonucleotidase family. Mg(2+) serves as cofactor.

Its function is as follows. Dephosphorylates the 5' and 2'(3')-phosphates of deoxyribonucleotides. This is Putative 5'(3')-deoxyribonucleotidase from Bordetella bronchiseptica (strain ATCC BAA-588 / NCTC 13252 / RB50) (Alcaligenes bronchisepticus).